The primary structure comprises 179 residues: MSNIHYIKGNILKGRTYKRIIIHSCNANGAWGGGIAYQLAVKHPKAEEVYVDLCERFGQKLLGKCVVIPSYSDDDVLIGCLFTSIFGGASHGSGTSIVDYTDKALSHFDELLAKEQSKSDNANLDKEIEKLLKLKSGVLKDYKLEMPKINSGIFGVPWPETEEVLKKYDRSMNFTVYEL.

Positions 1–179 (MSNIHYIKGN…RSMNFTVYEL (179 aa)) constitute a Macro domain. Substrate-binding positions include 9-11 (GNI), 24-26 (SCN), 31-36 (WGGGIA), and 149-155 (INSGIFG).

The protein belongs to the POA1 family.

It catalyses the reaction ADP-alpha-D-ribose 1''-phosphate + H2O = ADP-D-ribose + phosphate. Functionally, highly specific phosphatase involved in the metabolism of ADP-ribose 1''-phosphate (Appr1p) which is produced as a consequence of tRNA splicing. The sequence is that of ADP-ribose 1''-phosphate phosphatase (POA1) from Candida glabrata (strain ATCC 2001 / BCRC 20586 / JCM 3761 / NBRC 0622 / NRRL Y-65 / CBS 138) (Yeast).